The sequence spans 162 residues: uncharacterized protein (162 aa).

A C2H2-type zinc finger spans residues 29-50 (CPFCDYTNADAKVVRKHVKSKH). The disordered stretch occupies residues 60-93 (KLESQKSKNNGKKQTGQKKQGKGKKQPKRVRETC). The span at 68–87 (NNGKKQTGQKKQGKGKKQPK) shows a compositional bias: basic residues.

The protein to M.jannaschii MJECS06.

This is an uncharacterized protein from Methanocaldococcus jannaschii (strain ATCC 43067 / DSM 2661 / JAL-1 / JCM 10045 / NBRC 100440) (Methanococcus jannaschii).